Here is a 789-residue protein sequence, read N- to C-terminus: MKIAIALLACLGLAAAASFHQTHEVKIADKAFLMKQKFLFEIVYRVEDPLMFEDHIKQGEKFYFEESYYTHYDMYMKKFFEAYKAHALLPKGEFFGALVMSHAKQARGLFNFFYYAKDWETFAANVAWARMHVNEGMFVYALTMAVIHRNDFHGLMLPSIYEIFPQFFFNSKFVFEAEKFDYEMWMKMTMYEKEYMDVYYKTNGYDYSTMYRSSDYTYMKDFKTWQWWKLMGLGEHWYTEDKFILRENIYEFNQETKWLSMMKDVKKFYMPVDYTRDLNLYNKESKLSYFTEDLGWNAYWYYLNMDYSFFLDGNTFDLKNDRRGEWWLYNVHQLLSRYYMERLSHGFGEIPEFSWYQQIEMGYDPQLIYYNGIGYSFRKNYYEMETYANYDMLDKITGFLKRIHNIVEMGYYKTADGHTIDLRKPEAIEFIGNMLQGNVDAMDKMFYQFWYMLAHMYFADADYYQMDVYPNVMLNFETMMRDPMYYMFYKSIAQVYFQFMHYLPKYTKEQLLMPGVTMKNVEVSDLTTYFDLVDFDVTNMLNDKMIFQDGKFVWDMSLFARQMRLNHKPFTYTYTIESEKVEKVVIRAFLGPKFDEFGKVISLAENRMNFMEIDEFYYELKAGTNKITRKSSEFYWTVKDRTTYTELYYYTMMAFDGKYDFPLDISEPHCGFPDRLVLPMGWQKGMPMQMFFMVVPYVAPAHEQFSTFDYTYSCGIGSGARYVDSLPFGYPFDRAIDEYEFFVPNMYFKDVSIYHADTMEPYYKYKSYSNYGHFDYTFFNDYYTKYFKF.

Positions 1–16 (MKIAIALLACLGLAAA) are cleaved as a signal peptide.

It belongs to the hemocyanin family. As to quaternary structure, heterohexamer, composed of three subunits, alpha, beta and gamma. As to expression, larval hemolymph.

The protein localises to the secreted. The protein resides in the extracellular space. In terms of biological role, larval storage protein (LSP) which may serve as a store of amino acids for synthesis of adult proteins. The protein is Larval serum protein 1 beta chain (Lsp1beta) of Drosophila melanogaster (Fruit fly).